Consider the following 338-residue polypeptide: Alanine racemase (338 aa).

K33 functions as the Proton acceptor; specific for D-alanine in the catalytic mechanism. At K33 the chain carries N6-(pyridoxal phosphate)lysine. R126 serves as a coordination point for substrate. Y236 functions as the Proton acceptor; specific for L-alanine in the catalytic mechanism. M284 contacts substrate.

This sequence belongs to the alanine racemase family. Pyridoxal 5'-phosphate is required as a cofactor.

The catalysed reaction is L-alanine = D-alanine. The protein operates within amino-acid biosynthesis; D-alanine biosynthesis; D-alanine from L-alanine: step 1/1. In terms of biological role, catalyzes the interconversion of L-alanine and D-alanine. May also act on other amino acids. In Aquifex aeolicus (strain VF5), this protein is Alanine racemase (alr).